A 185-amino-acid chain; its full sequence is MSDSKDELIRMFFDEEAILFGRFILTSGKESNYYINVKKLSTKPRALKLIAKLMAGEAQKRGITFDRVAGPELGAVPIATALALETEKPLVIVRKKPKGHGTGSQLEGEVKAGDKVLLVEDVTTTGGSVLRAAEVLEREGAEIAAIMVVVDREEGAEETIGAKYTFLPLVRVSELFARRKEPQKE.

5-phospho-alpha-D-ribose 1-diphosphate-binding positions include Arg-94, Lys-95, Lys-98, His-100, and Glu-120–Ser-128. Orotate is bound by residues Thr-124 and Arg-152.

It belongs to the purine/pyrimidine phosphoribosyltransferase family. PyrE subfamily. In terms of assembly, homodimer. Mg(2+) is required as a cofactor.

The enzyme catalyses orotidine 5'-phosphate + diphosphate = orotate + 5-phospho-alpha-D-ribose 1-diphosphate. The protein operates within pyrimidine metabolism; UMP biosynthesis via de novo pathway; UMP from orotate: step 1/2. Functionally, catalyzes the transfer of a ribosyl phosphate group from 5-phosphoribose 1-diphosphate to orotate, leading to the formation of orotidine monophosphate (OMP). The sequence is that of Orotate phosphoribosyltransferase from Thermococcus kodakarensis (strain ATCC BAA-918 / JCM 12380 / KOD1) (Pyrococcus kodakaraensis (strain KOD1)).